The primary structure comprises 80 residues: Exodeoxyribonuclease 7 small subunit (80 aa).

It belongs to the XseB family. As to quaternary structure, heterooligomer composed of large and small subunits.

The protein localises to the cytoplasm. The enzyme catalyses Exonucleolytic cleavage in either 5'- to 3'- or 3'- to 5'-direction to yield nucleoside 5'-phosphates.. Its function is as follows. Bidirectionally degrades single-stranded DNA into large acid-insoluble oligonucleotides, which are then degraded further into small acid-soluble oligonucleotides. The chain is Exodeoxyribonuclease 7 small subunit from Lactobacillus helveticus (strain DPC 4571).